A 205-amino-acid chain; its full sequence is Small ribosomal subunit protein uS4 (205 aa).

Residues 1-46 (MSKRASSKYKIDRRMGENIWGRPKSPVNRREYGPGQHGQRRKGKLS) form a disordered region. Positions 94–154 (SRLDAIVYRA…QKSKQLAIVL (61 aa)) constitute an S4 RNA-binding domain.

Belongs to the universal ribosomal protein uS4 family. Part of the 30S ribosomal subunit. Contacts protein S5. The interaction surface between S4 and S5 is involved in control of translational fidelity.

Its function is as follows. One of the primary rRNA binding proteins, it binds directly to 16S rRNA where it nucleates assembly of the body of the 30S subunit. Functionally, with S5 and S12 plays an important role in translational accuracy. The chain is Small ribosomal subunit protein uS4 from Allorhizobium ampelinum (strain ATCC BAA-846 / DSM 112012 / S4) (Agrobacterium vitis (strain S4)).